Consider the following 301-residue polypeptide: Phosphatidylglycerol--prolipoprotein diacylglyceryl transferase (301 aa).

4 helical membrane passes run 10-30, 57-77, 92-112, and 119-139; these read IAFSLGPVKVHWYGLMYLASF, LLFYAMMGVVLGGRVGYMLFY, VWEGGMSFHGGLIGVLLAVAW, and LQMFDVLDFGAPLVPVGLGFG. An a 1,2-diacyl-sn-glycero-3-phospho-(1'-sn-glycerol)-binding site is contributed by Arg-140. 3 helical membrane passes run 202 to 222, 230 to 250, and 264 to 284; these read PSQLYEAFLEGLVMFIVLWLF, YAVSGLFALLYGVFRFLVEFV, and LTRGQILSLPLIVIGLFLFWL.

The protein belongs to the Lgt family.

The protein resides in the cell inner membrane. The enzyme catalyses L-cysteinyl-[prolipoprotein] + a 1,2-diacyl-sn-glycero-3-phospho-(1'-sn-glycerol) = an S-1,2-diacyl-sn-glyceryl-L-cysteinyl-[prolipoprotein] + sn-glycerol 1-phosphate + H(+). It participates in protein modification; lipoprotein biosynthesis (diacylglyceryl transfer). Its function is as follows. Catalyzes the transfer of the diacylglyceryl group from phosphatidylglycerol to the sulfhydryl group of the N-terminal cysteine of a prolipoprotein, the first step in the formation of mature lipoproteins. The polypeptide is Phosphatidylglycerol--prolipoprotein diacylglyceryl transferase (Xylella fastidiosa (strain 9a5c)).